A 343-amino-acid polypeptide reads, in one-letter code: Heat-inducible transcription repressor HrcA (343 aa).

The protein belongs to the HrcA family.

Its function is as follows. Negative regulator of class I heat shock genes (grpE-dnaK-dnaJ and groELS operons). Prevents heat-shock induction of these operons. The sequence is that of Heat-inducible transcription repressor HrcA from Mycobacterium ulcerans (strain Agy99).